Consider the following 142-residue polypeptide: 3-hydroxyacyl-[acyl-carrier-protein] dehydratase FabZ (142 aa).

H50 is an active-site residue.

Belongs to the thioester dehydratase family. FabZ subfamily.

It is found in the cytoplasm. The enzyme catalyses a (3R)-hydroxyacyl-[ACP] = a (2E)-enoyl-[ACP] + H2O. In terms of biological role, involved in unsaturated fatty acids biosynthesis. Catalyzes the dehydration of short chain beta-hydroxyacyl-ACPs and long chain saturated and unsaturated beta-hydroxyacyl-ACPs. This Clostridium botulinum (strain Alaska E43 / Type E3) protein is 3-hydroxyacyl-[acyl-carrier-protein] dehydratase FabZ.